Consider the following 129-residue polypeptide: M-zodatoxin-Lt8k (129 aa).

Residues 1–20 (MKYFVVALALVAAFACIAES) form the signal peptide. Positions 21 to 60 (KPAESEHELAEVEEENELADLEDAVWLEHLADLSDLEEAR) are excised as a propeptide.

This sequence belongs to the cationic peptide 06 (cytoinsectotoxin) family. Expressed by the venom gland.

It localises to the secreted. In terms of biological role, insecticidal, cytolytic and antimicrobial peptide. Forms voltage-dependent, ion-permeable channels in membranes. At high concentration causes cell membrane lysis. This Lachesana tarabaevi (Spider) protein is M-zodatoxin-Lt8k (cit 1-10).